Consider the following 815-residue polypeptide: G-type lectin S-receptor-like serine/threonine-protein kinase SD1-1 (815 aa).

Residues 1-22 form the signal peptide; sequence MREIHSLFSLSLFLISSSLSVA. The Extracellular portion of the chain corresponds to 23 to 438; it reads LDYNVITPKE…FAKIEFKGRE (416 aa). Positions 25–152 constitute a Bulb-type lectin domain; that stretch reads YNVITPKEFL…EEAVLWQSFD (128 aa). Asparagine 93, asparagine 249, and asparagine 265 each carry an N-linked (GlcNAc...) asparagine glycan. Residues 288 to 326 form the EGF-like domain; it reads PEDECDYYSICGAYAVCGINSKNTPSCSCLQGFKPKSGR. Cystine bridges form between cysteine 292-cysteine 304 and cysteine 298-cysteine 314. Residues asparagine 329 and asparagine 385 are each glycosylated (N-linked (GlcNAc...) asparagine). In terms of domain architecture, PAN spans 345–428; it reads CEKKDAFVKF…FGQDVYIRMG (84 aa). Intrachain disulfides connect cysteine 378/cysteine 403 and cysteine 382/cysteine 388. Residues 439-459 traverse the membrane as a helical segment; it reads VVGMVVGSVVAIAVVLVVVFA. Topologically, residues 460 to 815 are cytoplasmic; it reads CFRKKIMKRY…EVSITMLQGR (356 aa). In terms of domain architecture, Protein kinase spans 500–783; sequence FSYVNFLGRG…SDSSLPHPTQ (284 aa). Residues 506 to 514 and lysine 528 each bind ATP; that span reads LGRGGFGPV. Serine 534 bears the Phosphoserine mark. The caM-binding stretch occupies residues 589 to 606; it reads RRSTELDWKKRMNIINGV. Aspartate 625 acts as the Proton acceptor in catalysis. The residue at position 642 (serine 642) is a Phosphoserine. Threonine 659 is subject to Phosphothreonine. Serine 797 and serine 803 each carry phosphoserine. Threonine 810 is modified (phosphothreonine).

It belongs to the protein kinase superfamily. Ser/Thr protein kinase family. As to quaternary structure, interacts with PUB9, PUB13 and PUB14.

It is found in the cell membrane. The enzyme catalyses L-seryl-[protein] + ATP = O-phospho-L-seryl-[protein] + ADP + H(+). It carries out the reaction L-threonyl-[protein] + ATP = O-phospho-L-threonyl-[protein] + ADP + H(+). The polypeptide is G-type lectin S-receptor-like serine/threonine-protein kinase SD1-1 (SD11) (Arabidopsis thaliana (Mouse-ear cress)).